Reading from the N-terminus, the 129-residue chain is Small ribosomal subunit protein uS11 (129 aa).

Belongs to the universal ribosomal protein uS11 family. In terms of assembly, part of the 30S ribosomal subunit. Interacts with proteins S7 and S18. Binds to IF-3.

Functionally, located on the platform of the 30S subunit, it bridges several disparate RNA helices of the 16S rRNA. Forms part of the Shine-Dalgarno cleft in the 70S ribosome. In Geobacillus kaustophilus (strain HTA426), this protein is Small ribosomal subunit protein uS11.